The chain runs to 291 residues: Small ribosomal subunit protein uS2 (291 aa).

Residues 270–291 (NINEEANTEFEQALSDADEDKN) are disordered.

The protein belongs to the universal ribosomal protein uS2 family.

The sequence is that of Small ribosomal subunit protein uS2 from Rickettsia bellii (strain OSU 85-389).